The chain runs to 186 residues: Protein YABBY 2 (186 aa).

The segment at 17-44 (CNFCNTIFAVSVPSNSMLNIVTVRCGHC) adopts a C4-type zinc-finger fold.

Belongs to the YABBY family. As to expression, expressed in leaf blades, leaf sheaths and flowers.

Its subcellular location is the nucleus. This is Protein YABBY 2 (YAB2) from Oryza sativa subsp. japonica (Rice).